Here is a 375-residue protein sequence, read N- to C-terminus: Chaperone protein DnaJ (375 aa).

Residues 5-70 (DFYEVLGVEK…QKRAQYDQFG (66 aa)) form the J domain. The CR-type zinc-finger motif lies at 134–216 (GVEKEVSITK…CKGKGTVRKQ (83 aa)). Positions 147, 150, 164, 167, 190, 193, 204, and 207 each coordinate Zn(2+). 4 CXXCXGXG motif repeats span residues 147-154 (CETCTGTG), 164-171 (CPKCNGSG), 190-197 (CDMCGGKG), and 204-211 (CSDCKGKG).

Belongs to the DnaJ family. In terms of assembly, homodimer. Zn(2+) serves as cofactor.

It localises to the cytoplasm. In terms of biological role, participates actively in the response to hyperosmotic and heat shock by preventing the aggregation of stress-denatured proteins and by disaggregating proteins, also in an autonomous, DnaK-independent fashion. Unfolded proteins bind initially to DnaJ; upon interaction with the DnaJ-bound protein, DnaK hydrolyzes its bound ATP, resulting in the formation of a stable complex. GrpE releases ADP from DnaK; ATP binding to DnaK triggers the release of the substrate protein, thus completing the reaction cycle. Several rounds of ATP-dependent interactions between DnaJ, DnaK and GrpE are required for fully efficient folding. Also involved, together with DnaK and GrpE, in the DNA replication of plasmids through activation of initiation proteins. This is Chaperone protein DnaJ from Clostridium tetani (strain Massachusetts / E88).